The sequence spans 96 residues: Muconolactone Delta-isomerase (96 aa).

It belongs to the muconolactone Delta-isomerase family. In terms of assembly, homodecamer.

The enzyme catalyses (S)-muconolactone = (4,5-dihydro-5-oxofuran-2-yl)-acetate. The protein operates within aromatic compound metabolism; beta-ketoadipate pathway; 5-oxo-4,5-dihydro-2-furylacetate from catechol: step 3/3. The polypeptide is Muconolactone Delta-isomerase (catC) (Pseudomonas putida (Arthrobacter siderocapsulatus)).